The sequence spans 209 residues: Imidazoleglycerol-phosphate dehydratase (209 aa).

Belongs to the imidazoleglycerol-phosphate dehydratase family.

It is found in the cytoplasm. It catalyses the reaction D-erythro-1-(imidazol-4-yl)glycerol 3-phosphate = 3-(imidazol-4-yl)-2-oxopropyl phosphate + H2O. It functions in the pathway amino-acid biosynthesis; L-histidine biosynthesis; L-histidine from 5-phospho-alpha-D-ribose 1-diphosphate: step 6/9. The protein is Imidazoleglycerol-phosphate dehydratase of Prochlorococcus marinus (strain MIT 9313).